A 212-amino-acid chain; its full sequence is dTTP/UTP pyrophosphatase (212 aa).

The Proton acceptor role is filled by aspartate 88.

Belongs to the Maf family. YhdE subfamily. The cofactor is a divalent metal cation.

It is found in the cytoplasm. The catalysed reaction is dTTP + H2O = dTMP + diphosphate + H(+). The enzyme catalyses UTP + H2O = UMP + diphosphate + H(+). In terms of biological role, nucleoside triphosphate pyrophosphatase that hydrolyzes dTTP and UTP. May have a dual role in cell division arrest and in preventing the incorporation of modified nucleotides into cellular nucleic acids. The chain is dTTP/UTP pyrophosphatase from Colwellia psychrerythraea (strain 34H / ATCC BAA-681) (Vibrio psychroerythus).